Consider the following 401-residue polypeptide: Putative TRAP transporter large permease protein HI_0050 (401 aa).

11 helical membrane passes run 31–51 (FPLMAIPFFMLTGEIMKHGGI), 70–90 (LGYVAIISGLIFAGLSGSAVA), 115–135 (GLICAAGIISVVIPPSIPMII), 144–164 (ITKLFMGGTVPGLLMVVGLWV), 193–213 (AFWPLLLPIIIIVGLRGGIFT), 217–237 (AGVVAAIYAGIVSIAYKGLTF), 253–273 (MVMFVAASAMISAFAITVAQI), 290–310 (ILMFIIMLFLLLVGCVMDLIP), 330–350 (IAYFGIMMVINLSIGLITPPV), 353–373 (VLYVGSGISKLGIGALSKGIA), and 375–395 (FLFVYAIIMMLIVFFPEIVIV).

It belongs to the TRAP transporter large permease family.

The protein resides in the cell inner membrane. This is Putative TRAP transporter large permease protein HI_0050 from Haemophilus influenzae (strain ATCC 51907 / DSM 11121 / KW20 / Rd).